Reading from the N-terminus, the 408-residue chain is Exodeoxyribonuclease 7 large subunit (408 aa).

This sequence belongs to the XseA family. In terms of assembly, heterooligomer composed of large and small subunits.

Its subcellular location is the cytoplasm. The catalysed reaction is Exonucleolytic cleavage in either 5'- to 3'- or 3'- to 5'-direction to yield nucleoside 5'-phosphates.. Its function is as follows. Bidirectionally degrades single-stranded DNA into large acid-insoluble oligonucleotides, which are then degraded further into small acid-soluble oligonucleotides. The chain is Exodeoxyribonuclease 7 large subunit from Alkaliphilus oremlandii (strain OhILAs) (Clostridium oremlandii (strain OhILAs)).